We begin with the raw amino-acid sequence, 760 residues long: UDP-N-acetylmuramoyl-L-alanyl-D-glutamate--2,6-diaminopimelate ligase MurE homolog, chloroplastic (760 aa).

The transit peptide at methionine 1–glutamate 59 directs the protein to the chloroplast. 2 disordered regions span residues proline 13–leucine 159 and leucine 176–glycine 205. The span at serine 20–arginine 34 shows a compositional bias: pro residues. Over residues alanine 53–glutamate 62 the composition is skewed to acidic residues. Residues glutamate 118–arginine 132 are compositionally biased toward basic and acidic residues. Acidic residues-rich tracts occupy residues proline 150–leucine 159 and alanine 182–glycine 205.

It belongs to the MurCDEF family. MurE subfamily. As to quaternary structure, component of the plastid-encoded plastid RNA polymerase (PEP) complex.

It is found in the plastid. It localises to the chloroplast. In terms of biological role, required for the activity of the plastid-encoded RNA polymerase (PEP) and full expression of genes transcribed by PEP. Required for the proper build-up and formation of the PEP-complex. This Zea mays (Maize) protein is UDP-N-acetylmuramoyl-L-alanyl-D-glutamate--2,6-diaminopimelate ligase MurE homolog, chloroplastic.